The chain runs to 119 residues: Chorion class CA protein ERA.2 (119 aa).

The first 21 residues, 1 to 21 (MSKLVVFLFCIQVCFIQNVYS), serve as a signal peptide directing secretion. The left arm stretch occupies residues 22-55 (QCLGRVGPGGPPLGPYGGPLGGPGYGPVGYGGCG). Residues 56–103 (GYGGSGIGNVAVAGELPVAGSTGVTGQVPVIGAVEFAGPACAVGSVSI) form a central domain region. Residues 104–119 (SGACGPTCGCGGSPFY) are right arm.

It belongs to the chorion protein family.

Its function is as follows. This protein is one of many from the eggshell of the silk moth. The sequence is that of Chorion class CA protein ERA.2 (ERA.2) from Bombyx mori (Silk moth).